Consider the following 251-residue polypeptide: Triosephosphate isomerase (251 aa).

Residue 9 to 11 (NWK) participates in substrate binding. The Electrophile role is filled by H95. The Proton acceptor role is filled by E167. Substrate is bound by residues G173, S213, and 234–235 (GG).

It belongs to the triosephosphate isomerase family. Homodimer.

Its subcellular location is the cytoplasm. It catalyses the reaction D-glyceraldehyde 3-phosphate = dihydroxyacetone phosphate. Its pathway is carbohydrate biosynthesis; gluconeogenesis. It participates in carbohydrate degradation; glycolysis; D-glyceraldehyde 3-phosphate from glycerone phosphate: step 1/1. Its function is as follows. Involved in the gluconeogenesis. Catalyzes stereospecifically the conversion of dihydroxyacetone phosphate (DHAP) to D-glyceraldehyde-3-phosphate (G3P). In Ligilactobacillus salivarius (strain UCC118) (Lactobacillus salivarius), this protein is Triosephosphate isomerase.